The sequence spans 92 residues: Acylphosphatase (92 aa).

In terms of domain architecture, Acylphosphatase-like spans 5–92 (CIAAYVYGVV…ADFQGFSIRY (88 aa)). Active-site residues include R20 and N38.

Belongs to the acylphosphatase family.

The catalysed reaction is an acyl phosphate + H2O = a carboxylate + phosphate + H(+). This Serratia proteamaculans (strain 568) protein is Acylphosphatase (acyP).